The sequence spans 443 residues: MSKRQENKKIAFIHPDLGIGGAERLVVDAAVGLQDFGHDIIIYTSHCDLTHCFEEVSSGQLKVSVHGDSLPTNLFGKLHIFFAILRQFYLVCWLIFTGTIKNYDYFIVDQLSFCIPLLKMFCNSNCQVLFYCHFPDQLLVRRTSFLKKLYRVPFDAIEEYTTGSSDQIVVNSNFTKQIFHDTFKKLNHIDPQVVYPCVDTETIVDTNASSNSEVSKFFKDSPFFLSINRFERSKNIELAIKSFARMNKLMVTKAIKSFARMNKLMVTNKKPRLVIAGGYDSRVAENVEYLAELSTLCDELNLINFTIRGKLIMMPPSVDVLFLPSISTQLKNSLIQQTELLLYTPPREHFGIVPLEAMLAKTPVLAINFGGPLETVVNYNGNNLDEATGYTETGDFTKWSKIIMKHYNLDESTKIKLGENGRNRVINKFSRKKLAQSLDNILN.

The helical transmembrane segment at 80-100 (IFFAILRQFYLVCWLIFTGTI) threads the bilayer. Asparagine 173, asparagine 207, and asparagine 304 each carry an N-linked (GlcNAc...) asparagine glycan.

It belongs to the glycosyltransferase group 1 family.

It is found in the endoplasmic reticulum membrane. It carries out the reaction a beta-D-Man-(1-&gt;4)-beta-D-GlcNAc-(1-&gt;4)-alpha-D-GlcNAc-diphospho-di-trans,poly-cis-dolichol + GDP-alpha-D-mannose = an alpha-D-Man-(1-&gt;3)-beta-D-Man-(1-&gt;4)-beta-D-GlcNAc-(1-&gt;4)-alpha-D-GlcNAc-diphospho-di-trans,poly-cis-dolichol + GDP + H(+). The enzyme catalyses an alpha-D-Man-(1-&gt;3)-beta-D-Man-(1-&gt;4)-beta-D-GlcNAc-(1-&gt;4)-alpha-D-GlcNAc-diphospho-di-trans,poly-cis-dolichol + GDP-alpha-D-mannose = an alpha-D-Man-(1-&gt;3)-[alpha-D-Man-(1-&gt;6)]-beta-D-Man-(1-&gt;4)-beta-D-GlcNAc-(1-&gt;4)-alpha-D-GlcNAc-diphospho-di-trans,poly-cis-dolichol + GDP + H(+). The protein operates within protein modification; protein glycosylation. Its function is as follows. Mannosylates Man(2)GlcNAc(2)-dolichol diphosphate and Man(1)GlcNAc(2)-dolichol diphosphate to form Man(3)GlcNAc(2)-dolichol diphosphate. The sequence is that of Alpha-1,3/1,6-mannosyltransferase ALG2 (ALG2) from Candida albicans (strain SC5314 / ATCC MYA-2876) (Yeast).